We begin with the raw amino-acid sequence, 101 residues long: Enhancer of yellow 2 transcription factor (101 aa).

This sequence belongs to the ENY2 family. As to quaternary structure, component of the nuclear pore complex (NPC)-associated TREX-2/AMEX complex (anchoring and mRNA export complex), composed of e(y)2, xmas and PCID2. Within the TREX-2/ AMEX complex, interactions with xmas is required for localization to the nuclear periphery. Component of the SAGA transcription coactivator-HAT complexes, at least composed of Ada2b, e(y)2, Pcaf/Gcn5, Taf10 and Nipped-A/Trrap. Within the SAGA complex, e(y)2, Sgf11, and not/nonstop form an additional subcomplex of SAGA called the DUB module (deubiquitination module). Component of the THO complex, composed of at least e(y)2, HPR1, THO2, THOC5, THOC6 and THOC7. Interacts with Taf9. Interacts with su(Hw) (via zinc fingers). Interacts with the nuclear pore complex (NPC). Interaction between the TREX-2/AMEX complex and the ORC complex is required for ORC localization to mRNPs, and consequently mRNA export. Within the TREX-2/AMEX-ORC complex, interacts with Orc6 and (via N-terminus or C-terminus) with Orc3. Interacts with the zinc finger protein CG9890. Ubiquitous.

It localises to the nucleus. The protein resides in the nucleoplasm. Its subcellular location is the cytoplasm. It is found in the nucleus membrane. Involved in mRNA export coupled transcription activation by association with both the TREX-2/AMEX and the SAGA complexes. The SAGA complex is a multiprotein complex that activates transcription by remodeling chromatin and mediating histone acetylation and deubiquitination. Within the SAGA complex, participates in a subcomplex that specifically deubiquitinates histone H2B. The SAGA complex is recruited to specific gene promoters by activators, where it is required for transcription. Required for nuclear receptor-mediated transactivation. Involved in transcription elongation by recruiting the THO complex onto nascent mRNA. The TREX-2/AMEX complex functions in docking export-competent ribonucleoprotein particles (mRNPs) to the nuclear entrance of the nuclear pore complex (nuclear basket). TREX-2/AMEX participates in mRNA export and accurate chromatin positioning in the nucleus by tethering genes to the nuclear periphery. Recruited to the su(Hw) insulators via its interaction with su(Hw) and participates in the barrier activity of such insulators. In contrast, it does not participate in the enhancer-blocking activity of the su(Hw) insulators. The protein is Enhancer of yellow 2 transcription factor of Drosophila melanogaster (Fruit fly).